A 57-amino-acid chain; its full sequence is DNA-directed RNA polymerase subunit Rpo6 (57 aa).

Belongs to the archaeal Rpo6/eukaryotic RPB6 RNA polymerase subunit family. In terms of assembly, part of the RNA polymerase complex.

The protein resides in the cytoplasm. The catalysed reaction is RNA(n) + a ribonucleoside 5'-triphosphate = RNA(n+1) + diphosphate. Its function is as follows. DNA-dependent RNA polymerase (RNAP) catalyzes the transcription of DNA into RNA using the four ribonucleoside triphosphates as substrates. In Haloarcula marismortui (strain ATCC 43049 / DSM 3752 / JCM 8966 / VKM B-1809) (Halobacterium marismortui), this protein is DNA-directed RNA polymerase subunit Rpo6.